The chain runs to 363 residues: 1,2-Dihydrovomilenine reductase (363 aa).

The region spanning 24–352 is the Enoyl reductase (ER) domain; sequence GILSPFKFSR…KGDVRYRFVI (329 aa). Residue C51 participates in Zn(2+) binding. Residue S53 participates in NADP(+) binding. Residues D54, E74, C104, C107, C110, and C118 each contribute to the Zn(2+) site. The NADP(+) site is built by L193, G195, L196, S215, T216, S217, K220, K221, V278, A280, T302, and R349.

The protein belongs to the zinc-containing alcohol dehydrogenase family. Class-P subfamily. As to quaternary structure, homodimer. The cofactor is Zn(2+). As to expression, mainly expressed in mature roots and, to a lower extent, in stems and leaves.

The protein localises to the cytoplasm. It carries out the reaction 17-O-acetylnorajmaline + NADP(+) = (2R)-1,2-dihydrovomilenine + NADPH + 2 H(+). The enzyme catalyses (20S)-19,20-dihydrovomilenine + NADP(+) = vomilenine + NADPH + H(+). It functions in the pathway alkaloid biosynthesis; ajmaline biosynthesis. In terms of biological role, alcohol dehydrogenase involved in the biosynthesis of ajmaline-type monoterpenoid indole alkaloids (MIAs) natural products, important plant-derived pharmaceuticals used in the therapy of heart disorders. Catalyzes the conversion of 1,2-dihydrovomilenine to 17-O-acetylnorajmaline, an intermediate chemical in the biosynthesis of ajmaline. Also able, with a lower efficiency, to convert vomilenine into 19,20-dihydrovomilenine. The polypeptide is 1,2-Dihydrovomilenine reductase (Rauvolfia serpentina (Serpentine wood)).